The sequence spans 81 residues: Putative membrane protein insertion efficiency factor (81 aa).

Belongs to the UPF0161 family.

Its subcellular location is the cell membrane. Could be involved in insertion of integral membrane proteins into the membrane. The chain is Putative membrane protein insertion efficiency factor from Geobacillus kaustophilus (strain HTA426).